We begin with the raw amino-acid sequence, 212 residues long: Small ribosomal subunit protein eS1 (212 aa).

Belongs to the eukaryotic ribosomal protein eS1 family.

In Staphylothermus marinus (strain ATCC 43588 / DSM 3639 / JCM 9404 / F1), this protein is Small ribosomal subunit protein eS1.